The chain runs to 88 residues: Apolipoprotein C-I (88 aa).

The signal sequence occupies residues 1–26 (MRLFISLPILIVVLAMALEGPAPAQA).

This sequence belongs to the apolipoprotein C1 family.

It is found in the secreted. Functionally, inhibitor of lipoprotein binding to the low density lipoprotein (LDL) receptor, LDL receptor-related protein, and very low density lipoprotein (VLDL) receptor. Associates with high density lipoproteins (HDL) and the triacylglycerol-rich lipoproteins in the plasma and makes up about 10% of the protein of the VLDL and 2% of that of HDL. Appears to interfere directly with fatty acid uptake and is also the major plasma inhibitor of cholesteryl ester transfer protein (CETP). Modulates the interaction of APOE with beta-migrating VLDL and inhibits binding of beta-VLDL to the LDL receptor-related protein. Binds free fatty acids and reduces their intracellular esterification. The polypeptide is Apolipoprotein C-I (Apoc1) (Neotoma lepida (Desert woodrat)).